A 722-amino-acid chain; its full sequence is Host cell factor 2 (722 aa).

Kelch repeat units follow at residues 34 to 79 (LMII…GFVC), 83 to 130 (RILV…RLGH), 207 to 255 (KMYV…VIGN), and 257 to 303 (MYIF…VSDS). 3 Fibronectin type-III domains span residues 359 to 460 (APSQ…VDSS), 514 to 604 (TPSN…TCTP), and 606 to 716 (FPGA…DQEK). Residues 398–476 (ATSSDSSAAP…LAPNTSNNSS (79 aa)) are disordered. Polar residues predominate over residues 419 to 436 (QGSNSTLHNSVSDTVNST).

As to quaternary structure, binds KMT2A/MLL1. Component of the MLL1/MLL complex, at least composed of KMT2A/MLL1, ASH2L, RBBP5, DPY30, WDR5, MEN1, HCFC1 and HCFC2. Interacts with TASOR. In terms of tissue distribution, expressed in the spermatogonia, spermatocytes and ovary.

The protein localises to the cytoplasm. Its subcellular location is the nucleus. This chain is Host cell factor 2 (Hcfc2), found in Mus musculus (Mouse).